The following is a 215-amino-acid chain: 3-isopropylmalate dehydratase small subunit (215 aa).

Belongs to the LeuD family. LeuD type 1 subfamily. Heterodimer of LeuC and LeuD.

It catalyses the reaction (2R,3S)-3-isopropylmalate = (2S)-2-isopropylmalate. The protein operates within amino-acid biosynthesis; L-leucine biosynthesis; L-leucine from 3-methyl-2-oxobutanoate: step 2/4. Catalyzes the isomerization between 2-isopropylmalate and 3-isopropylmalate, via the formation of 2-isopropylmaleate. In Chromohalobacter salexigens (strain ATCC BAA-138 / DSM 3043 / CIP 106854 / NCIMB 13768 / 1H11), this protein is 3-isopropylmalate dehydratase small subunit.